The sequence spans 562 residues: Adenylate kinase isoenzyme 5 (562 aa).

Adenylate kinase stretches follow at residues 133–316 (KIIL…MAVD) and 377–559 (KIIF…TAID). An ATP-binding site is contributed by 142 to 147 (GSGKGT). The interval 162 to 193 (SVGELLRKKIHSTSSNRKWSLIAKIITTGELA) is NMP 1. AMP is bound by residues arginine 168, 191–193 (ELA), 219–222 (GFPR), and glutamine 226. Residues 256-266 (KRAEQQGRPDD) are LID 1. Arginine 257 serves as a coordination point for ATP. AMP-binding residues include arginine 263 and arginine 274. ATP is bound at residue 386 to 391 (GSGKGT). Residues 406–435 (STGELLREELASESERSKLIRDIMERGDLV) are NMP 2. AMP-binding positions include threonine 407, arginine 412, 433-435 (DLV), 462-465 (GYPR), and glutamine 469. The segment at 499–509 (QRSRSSLPVDD) is LID 2. Arginine 500 is an ATP binding site. Position 517 (arginine 517) interacts with AMP. Glycine 545 serves as a coordination point for ATP.

This sequence belongs to the adenylate kinase family. As to quaternary structure, monomer. Interacts with YWHAZ. In terms of tissue distribution, brain specific.

The protein resides in the cytoplasm. The enzyme catalyses AMP + ATP = 2 ADP. It catalyses the reaction a 2'-deoxyribonucleoside 5'-diphosphate + ATP = a 2'-deoxyribonucleoside 5'-triphosphate + ADP. The catalysed reaction is a ribonucleoside 5'-diphosphate + ATP = a ribonucleoside 5'-triphosphate + ADP. Functionally, nucleoside monophosphate (NMP) kinase that catalyzes the reversible transfer of the terminal phosphate group between nucleoside triphosphates and monophosphates. Active on AMP and dAMP with ATP as a donor. When GTP is used as phosphate donor, the enzyme phosphorylates AMP, CMP, and to a small extent dCMP. Also displays broad nucleoside diphosphate kinase activity. This Homo sapiens (Human) protein is Adenylate kinase isoenzyme 5 (AK5).